Reading from the N-terminus, the 118-residue chain is Large ribosomal subunit protein uL18 (118 aa).

It belongs to the universal ribosomal protein uL18 family. In terms of assembly, part of the 50S ribosomal subunit; part of the 5S rRNA/L5/L18/L25 subcomplex. Contacts the 5S and 23S rRNAs.

Its function is as follows. This is one of the proteins that bind and probably mediate the attachment of the 5S RNA into the large ribosomal subunit, where it forms part of the central protuberance. The protein is Large ribosomal subunit protein uL18 of Sulfurimonas denitrificans (strain ATCC 33889 / DSM 1251) (Thiomicrospira denitrificans (strain ATCC 33889 / DSM 1251)).